Reading from the N-terminus, the 357-residue chain is 3-dehydroquinate synthase (357 aa).

Residues 69-74, 103-107, 127-128, lysine 140, lysine 149, and 167-170 contribute to the NAD(+) site; these read DGEQFK, GVVGD, TT, and CLQT. Positions 182, 245, and 262 each coordinate Zn(2+).

It belongs to the sugar phosphate cyclases superfamily. Dehydroquinate synthase family. Requires Co(2+) as cofactor. Zn(2+) serves as cofactor. The cofactor is NAD(+).

The protein localises to the cytoplasm. It carries out the reaction 7-phospho-2-dehydro-3-deoxy-D-arabino-heptonate = 3-dehydroquinate + phosphate. Its pathway is metabolic intermediate biosynthesis; chorismate biosynthesis; chorismate from D-erythrose 4-phosphate and phosphoenolpyruvate: step 2/7. In terms of biological role, catalyzes the conversion of 3-deoxy-D-arabino-heptulosonate 7-phosphate (DAHP) to dehydroquinate (DHQ). The sequence is that of 3-dehydroquinate synthase from Idiomarina loihiensis (strain ATCC BAA-735 / DSM 15497 / L2-TR).